Here is a 227-residue protein sequence, read N- to C-terminus: Probable maleylacetoacetate isomerase 2 (227 aa).

In terms of domain architecture, GST N-terminal spans 14-97; sequence IQPILYSYWR…YLEETRPQRP (84 aa). Glutathione is bound by residues 24–29, Gln-55, Val-69, 81–82, Gln-121, and 125–127; these read SSCSWR, ES, and NLI. Positions 102–222 constitute a GST C-terminal domain; the sequence is DVHKRAKVRE…HPSNQPDCPP (121 aa).

This sequence belongs to the GST superfamily. Zeta family. Glutathione serves as cofactor.

The protein localises to the cytoplasm. The enzyme catalyses 4-maleylacetoacetate = 4-fumarylacetoacetate. It catalyses the reaction RX + glutathione = an S-substituted glutathione + a halide anion + H(+). It participates in amino-acid degradation; L-phenylalanine degradation; acetoacetate and fumarate from L-phenylalanine: step 5/6. In terms of biological role, catalyzes the glutathione dependent oxygenation of dichloroacetic acid to glyoxylic acid in vitro. Has no glutathione thioltransferase activity with 4-hydroxynonenal (4-HNE), adrenochrome, phenethyl isothiocyanate (PEITC), 5-hydroperoxyeicosatetraenoic acid ((5S)-HpETE), prostaglandin A2 (PGA2) or 2-hydroxyethyldisulfide (HED). This Drosophila melanogaster (Fruit fly) protein is Probable maleylacetoacetate isomerase 2 (GstZ2).